Consider the following 466-residue polypeptide: Xanthine permease XanQ (466 aa).

The Cytoplasmic segment spans residues Met1–Leu44. A helical transmembrane segment spans residues Ile45–Met65. Residues Ile66 to Leu74 lie on the Periplasmic side of the membrane. The helical transmembrane segment at Gln75–Ser95 threads the bilayer. The Cytoplasmic portion of the chain corresponds to Phe96–Val99. A helical transmembrane segment spans residues Met100–Ser120. Over Leu121–Leu139 the chain is Periplasmic. A helical transmembrane segment spans residues Pro140–Leu160. Residues Ser161–Phe170 are Cytoplasmic-facing. Residues Gly171–Gly191 form a helical membrane-spanning segment. At Leu192–Ile199 the chain is on the periplasmic side. A helical transmembrane segment spans residues Gly200 to Val220. Residues Gly221–Gly229 are Cytoplasmic-facing. Residues Met230–Tyr250 traverse the membrane as a helical segment. Residues Gly251–Ile277 are Periplasmic-facing. A helical membrane pass occupies residues Thr278–Lys298. The Cytoplasmic segment spans residues Gly299 to Leu317. A helical membrane pass occupies residues Pro318–Tyr338. Topologically, residues Val339–Thr361 are periplasmic. The chain crosses the membrane as a helical span at residues Thr362–Ala382. A topological domain (cytoplasmic) is located at residue Gly383. The chain crosses the membrane as a helical span at residues Ile384–Ser403. At Leu404 to Ile444 the chain is on the periplasmic side. A helical membrane pass occupies residues Ile445–Met465. Asp466 is a topological domain (cytoplasmic).

The protein belongs to the nucleobase:cation symporter-2 (NCS2) (TC 2.A.40) family.

It localises to the cell inner membrane. The catalysed reaction is xanthine(in) + H(+)(in) = xanthine(out) + H(+)(out). Functionally, specific, proton motive force-dependent high-affinity transporter for xanthine. This Escherichia coli O157:H7 protein is Xanthine permease XanQ (xanQ).